We begin with the raw amino-acid sequence, 494 residues long: Maintenance of mitochondrial morphology protein 1 (494 aa).

Over 1–25 (MGDDQSLRSTVAENDISANLSFTQG) the chain is Lumenal. The chain crosses the membrane as a helical span at residues 26–46 (FLLGQLSVVLLIGAFIKFFIF). Residues 47–494 (GEAPPPPSRG…GTLPGGAAAN (448 aa)) are Cytoplasmic-facing. 3 disordered regions span residues 53-99 (PSRG…VPSS), 278-330 (PPLH…KSNV), and 395-494 (RTGV…AAAN). Over residues 57 to 67 (LSHRASTHRRS) the composition is skewed to basic residues. 2 stretches are compositionally biased toward polar residues: residues 68 to 81 (NSIY…GTSR) and 88 to 99 (STSNVLRPVPSS). The SMP-LTD domain occupies 134–387 (QPESLDWFNV…EPRVQVVGLP (254 aa)). Residues 278-290 (PPLHTPSPSPSPP) are compositionally biased toward pro residues. 2 stretches are compositionally biased toward polar residues: residues 300–318 (THPT…NAQE) and 406–415 (TGSNAASRSA). The span at 425–437 (RADDIGREPDGLR) shows a compositional bias: basic and acidic residues.

The protein belongs to the MMM1 family. Homodimer. Component of the ER-mitochondria encounter structure (ERMES) or MDM complex, composed of mmm1, mdm10, mdm12 and mdm34. A mmm1 homodimer associates with one molecule of mdm12 on each side in a pairwise head-to-tail manner, and the SMP-LTD domains of mmm1 and mdm12 generate a continuous hydrophobic tunnel for phospholipid trafficking.

The protein localises to the endoplasmic reticulum membrane. Its function is as follows. Component of the ERMES/MDM complex, which serves as a molecular tether to connect the endoplasmic reticulum (ER) and mitochondria. Components of this complex are involved in the control of mitochondrial shape and protein biogenesis, and function in nonvesicular lipid trafficking between the ER and mitochondria. The mdm12-mmm1 subcomplex functions in the major beta-barrel assembly pathway that is responsible for biogenesis of all outer membrane beta-barrel proteins, and acts in a late step after the SAM complex. The mdm10-mdm12-mmm1 subcomplex further acts in the TOM40-specific pathway after the action of the mdm12-mmm1 complex. Essential for establishing and maintaining the structure of mitochondria and maintenance of mtDNA nucleoids. This chain is Maintenance of mitochondrial morphology protein 1, found in Aspergillus oryzae (strain ATCC 42149 / RIB 40) (Yellow koji mold).